The primary structure comprises 221 residues: Ktr system potassium uptake protein C (221 aa).

The 117-residue stretch at 2-118 (KKEFAVIGLG…LSKIGADHIV (117 aa)) folds into the RCK N-terminal domain. Residues Arg12, 32 to 34 (DID), 52 to 53 (DS), 74 to 76 (IGE), 99 to 101 (KAQ), His105, and Glu121 each bind NAD(+). Residues 135-219 (NNVLDYLELS…ISRFEKRVLH (85 aa)) enclose the RCK C-terminal domain.

This sequence belongs to the KtrA potassium transport family. In terms of assembly, homodimer, tetramer (dimer of homodimer) and octamer (tetramer of homodimer). Part of the KtrCD complex formed by an octameric catalytic ring of KtrC and a membrane associated dimer of KtrD forming a potassium channel.

It localises to the cell membrane. Catalytic subunit of the KtrCD potassium uptake transporter. The 2 major potassium transporter complexes KtrAB and KtrCD confer resistance to both suddenly imposed and prolonged osmotic stress. The protein is Ktr system potassium uptake protein C (ktrC) of Bacillus subtilis (strain 168).